Consider the following 578-residue polypeptide: Isocitrate dehydrogenase kinase/phosphatase (578 aa).

ATP is bound by residues 315–321 (APGIRGM) and lysine 336. Aspartate 371 is a catalytic residue.

Belongs to the AceK family.

Its subcellular location is the cytoplasm. The enzyme catalyses L-seryl-[isocitrate dehydrogenase] + ATP = O-phospho-L-seryl-[isocitrate dehydrogenase] + ADP + H(+). In terms of biological role, bifunctional enzyme which can phosphorylate or dephosphorylate isocitrate dehydrogenase (IDH) on a specific serine residue. This is a regulatory mechanism which enables bacteria to bypass the Krebs cycle via the glyoxylate shunt in response to the source of carbon. When bacteria are grown on glucose, IDH is fully active and unphosphorylated, but when grown on acetate or ethanol, the activity of IDH declines drastically concomitant with its phosphorylation. This chain is Isocitrate dehydrogenase kinase/phosphatase, found in Shigella dysenteriae serotype 1 (strain Sd197).